The chain runs to 98 residues: Aspartyl/glutamyl-tRNA(Asn/Gln) amidotransferase subunit C (98 aa).

This sequence belongs to the GatC family. As to quaternary structure, heterotrimer of A, B and C subunits.

The enzyme catalyses L-glutamyl-tRNA(Gln) + L-glutamine + ATP + H2O = L-glutaminyl-tRNA(Gln) + L-glutamate + ADP + phosphate + H(+). It catalyses the reaction L-aspartyl-tRNA(Asn) + L-glutamine + ATP + H2O = L-asparaginyl-tRNA(Asn) + L-glutamate + ADP + phosphate + 2 H(+). In terms of biological role, allows the formation of correctly charged Asn-tRNA(Asn) or Gln-tRNA(Gln) through the transamidation of misacylated Asp-tRNA(Asn) or Glu-tRNA(Gln) in organisms which lack either or both of asparaginyl-tRNA or glutaminyl-tRNA synthetases. The reaction takes place in the presence of glutamine and ATP through an activated phospho-Asp-tRNA(Asn) or phospho-Glu-tRNA(Gln). The sequence is that of Aspartyl/glutamyl-tRNA(Asn/Gln) amidotransferase subunit C from Mycobacterium avium (strain 104).